Consider the following 1256-residue polypeptide: N-acetylglucosamine-1-phosphotransferase subunits alpha/beta (1256 aa).

Residues 22 to 42 (VCFLGVVVTIVSAFQFGEVVL) traverse the membrane as a helical segment. Residues N83, N114, N148, N179, and N250 are each glycosylated (N-linked (GlcNAc...) asparagine). 4 cysteine pairs are disulfide-bonded: C438–C461, C452–C468, C505–C528, and C519–C535. 2 LNR repeats span residues 438-473 (CAEGCPGSWIKDGYCDKACNNSACDWDGGDCSGNSG) and 505-545 (CNQG…ELYK). Ca(2+) is bound by residues D449, D464, D467, D516, D531, and D534. N-linked (GlcNAc...) asparagine glycosylation is found at N614, N699, N729, N829, and N1009. In terms of domain architecture, DMAP1-binding spans 699-798 (NISLLPKDAQ…TFPAVSVKVN (100 aa)). Positions 1005–1040 (VQPLNISQVFDEVDTDQSGVLSDREIRTLATRIHEL) constitute an EF-hand domain. Residues D1018, D1020, S1022, and E1029 each contribute to the Ca(2+) site. N1129 is a glycosylation site (N-linked (GlcNAc...) asparagine). The chain crosses the membrane as a helical span at residues 1215–1235 (VLATLIMFTIFSFFAEQLIAL).

This sequence belongs to the stealth family. As to quaternary structure, hexamer of two alpha, two beta and two gamma (GNPTG) subunits; disulfide-linked. The alpha and/or the beta subunits of the enzyme constitute the catalytic subunits. Interacts with LYSET; facilitates proper localization of GNPTAB. The alpha- and beta-subunits are generated by a proteolytic cleavage by MBTPS1 protease at the Lys-928-Asp-929 bond. In terms of tissue distribution, expressed in the heart, whole brain, placenta, lung, liver, skeletal muscle, kidney and pancreas.

It localises to the golgi apparatus membrane. It catalyses the reaction N(4)-[alpha-D-mannosyl-(1-&gt;2)-alpha-D-mannosyl-(glycan)]-L-asparaginyl-[protein] + UDP-N-acetyl-alpha-D-glucosamine = N(4)-[6-(N-acetyl-alpha-D-glucosaminyl-1-phospho)-alpha-D-mannosyl-(1-&gt;2)-alpha-D-mannosyl-(glycan)]-L-asparaginyl-[protein] + UMP + H(+). Catalyzes the formation of mannose 6-phosphate (M6P) markers on high mannose type oligosaccharides in the Golgi apparatus. M6P residues are required to bind to the M6P receptors (MPR), which mediate the vesicular transport of lysosomal enzymes to the endosomal/prelysosomal compartment. The protein is N-acetylglucosamine-1-phosphotransferase subunits alpha/beta (GNPTAB) of Homo sapiens (Human).